Here is a 362-residue protein sequence, read N- to C-terminus: 3-dehydroquinate synthase (362 aa).

Residues 71–76 (DGEKYK), 105–109 (GVIGD), 129–130 (TT), Lys142, and Lys151 each bind NAD(+). Residues Glu184, His248, and His265 each contribute to the Zn(2+) site.

The protein belongs to the sugar phosphate cyclases superfamily. Dehydroquinate synthase family. It depends on Co(2+) as a cofactor. Requires Zn(2+) as cofactor. The cofactor is NAD(+).

Its subcellular location is the cytoplasm. It catalyses the reaction 7-phospho-2-dehydro-3-deoxy-D-arabino-heptonate = 3-dehydroquinate + phosphate. It functions in the pathway metabolic intermediate biosynthesis; chorismate biosynthesis; chorismate from D-erythrose 4-phosphate and phosphoenolpyruvate: step 2/7. In terms of biological role, catalyzes the conversion of 3-deoxy-D-arabino-heptulosonate 7-phosphate (DAHP) to dehydroquinate (DHQ). In Hamiltonella defensa subsp. Acyrthosiphon pisum (strain 5AT), this protein is 3-dehydroquinate synthase.